The sequence spans 647 residues: Threonine--tRNA ligase (647 aa).

Residues Met1–Thr61 form the TGS domain. Residues Asp242–Pro540 form a catalytic region. Cys336, His387, and His517 together coordinate Zn(2+).

This sequence belongs to the class-II aminoacyl-tRNA synthetase family. As to quaternary structure, homodimer. Requires Zn(2+) as cofactor.

It localises to the cytoplasm. It catalyses the reaction tRNA(Thr) + L-threonine + ATP = L-threonyl-tRNA(Thr) + AMP + diphosphate + H(+). Its function is as follows. Catalyzes the attachment of threonine to tRNA(Thr) in a two-step reaction: L-threonine is first activated by ATP to form Thr-AMP and then transferred to the acceptor end of tRNA(Thr). Also edits incorrectly charged L-seryl-tRNA(Thr). This is Threonine--tRNA ligase from Streptococcus gordonii (strain Challis / ATCC 35105 / BCRC 15272 / CH1 / DL1 / V288).